The primary structure comprises 423 residues: Serine hydroxymethyltransferase (423 aa).

119 to 121 (GHI) contacts (6S)-5,6,7,8-tetrahydrofolate. Lysine 225 bears the N6-(pyridoxal phosphate)lysine mark.

The protein belongs to the SHMT family. As to quaternary structure, homodimer. It depends on pyridoxal 5'-phosphate as a cofactor.

The protein resides in the cytoplasm. It catalyses the reaction (6R)-5,10-methylene-5,6,7,8-tetrahydrofolate + glycine + H2O = (6S)-5,6,7,8-tetrahydrofolate + L-serine. Its pathway is one-carbon metabolism; tetrahydrofolate interconversion. It participates in amino-acid biosynthesis; glycine biosynthesis; glycine from L-serine: step 1/1. Functionally, catalyzes the reversible interconversion of serine and glycine with tetrahydrofolate (THF) serving as the one-carbon carrier. Also exhibits THF-independent aldolase activity toward beta-hydroxyamino acids, producing glycine and aldehydes, via a retro-aldol mechanism. The polypeptide is Serine hydroxymethyltransferase (Methanocella arvoryzae (strain DSM 22066 / NBRC 105507 / MRE50)).